The sequence spans 628 residues: Cytoplasmic dynein 1 intermediate chain 1 (628 aa).

Composition is skewed to basic and acidic residues over residues 1-13 and 20-60; these read MSDKSDLKAELER and QIRE…RETE. The disordered stretch occupies residues 1 to 114; that stretch reads MSDKSDLKAE…RTLQWDTDPS (114 aa). S2 carries the N-acetylserine modification. S50 bears the Phosphoserine mark. Over residues 70–79 the composition is skewed to pro residues; sequence PEPPLVPTPM. Residues 80–90 show a composition bias toward low complexity; the sequence is SPSSKSVSTPS. The residue at position 83 (S83) is a Phosphoserine. A Phosphothreonine modification is found at T88. Residues S90, S94, and S97 each carry the phosphoserine modification. The segment covering 105–114 has biased composition (polar residues); sequence RTLQWDTDPS. The interval 130-146 is interaction with DYNLT1; the sequence is KLGVSKVTQVDFLPREV. A disordered region spans residues 152 to 204; the sequence is ETQTPLATHQSEEDEEDEEMVEPKIGHDSELENQEKKQETKEAPPRELTEEEK. Phosphothreonine is present on T159. A phosphoserine mark is found at S162 and S180. The segment covering 172 to 204 has biased composition (basic and acidic residues); that stretch reads VEPKIGHDSELENQEKKQETKEAPPRELTEEEK. WD repeat units follow at residues 268–317, 321–361, 370–411, 420–460, 465–510, 513–553, and 559–598; these read SKHR…TTPE, HCQS…RTPV, AHTH…TPQE, SKPV…AGIG, GHQG…PLYS, DNAD…EVPT, and EGASALNRVRWAQGGKEVAVGDSEGRIWIYDVGELAVPHN. S618 carries the phosphoserine modification.

It belongs to the dynein intermediate chain family. In terms of assembly, homodimer. The cytoplasmic dynein 1 complex consists of two catalytic heavy chains (HCs) and a number of non-catalytic subunits presented by intermediate chains (ICs), light intermediate chains (LICs) and light chains (LCs); the composition seems to vary in respect to the IC, LIC and LC composition. The heavy chain homodimer serves as a scaffold for the probable homodimeric assembly of the respective non-catalytic subunits. The ICs and LICs bind directly to the HC dimer and the LCs assemble on the IC dimer. Interacts with DYNC1H1. Interacts with DYNLT1 and DYNLT3. Interacts with DCTN1. Interacts with DYNLL2. Interacts with MCRS1; the interaction is required for the proper distribution of centriolar satellites.

Its subcellular location is the cytoplasm. The protein resides in the chromosome. The protein localises to the centromere. It is found in the kinetochore. It localises to the cytoskeleton. Its subcellular location is the spindle pole. In terms of biological role, acts as one of several non-catalytic accessory components of the cytoplasmic dynein 1 complex that are thought to be involved in linking dynein to cargos and to adapter proteins that regulate dynein function. Cytoplasmic dynein 1 acts as a motor for the intracellular retrograde motility of vesicles and organelles along microtubules. The intermediate chains mediate the binding of dynein to dynactin via its 150 kDa component (p150-glued) DCTN1. May play a role in mediating the interaction of cytoplasmic dynein with membranous organelles and kinetochores. In Mus musculus (Mouse), this protein is Cytoplasmic dynein 1 intermediate chain 1 (Dync1i1).